Reading from the N-terminus, the 297-residue chain is Phosphoribosylaminoimidazole-succinocarboxamide synthase (297 aa).

Belongs to the SAICAR synthetase family.

It catalyses the reaction 5-amino-1-(5-phospho-D-ribosyl)imidazole-4-carboxylate + L-aspartate + ATP = (2S)-2-[5-amino-1-(5-phospho-beta-D-ribosyl)imidazole-4-carboxamido]succinate + ADP + phosphate + 2 H(+). Its pathway is purine metabolism; IMP biosynthesis via de novo pathway; 5-amino-1-(5-phospho-D-ribosyl)imidazole-4-carboxamide from 5-amino-1-(5-phospho-D-ribosyl)imidazole-4-carboxylate: step 1/2. The polypeptide is Phosphoribosylaminoimidazole-succinocarboxamide synthase (Corynebacterium glutamicum (strain R)).